Here is a 467-residue protein sequence, read N- to C-terminus: UDP-N-acetylmuramate--L-alanine ligase (467 aa).

114 to 120 lines the ATP pocket; sequence GTHGKTT.

It belongs to the MurCDEF family.

The protein resides in the cytoplasm. It carries out the reaction UDP-N-acetyl-alpha-D-muramate + L-alanine + ATP = UDP-N-acetyl-alpha-D-muramoyl-L-alanine + ADP + phosphate + H(+). It functions in the pathway cell wall biogenesis; peptidoglycan biosynthesis. Functionally, cell wall formation. In Nitrobacter winogradskyi (strain ATCC 25391 / DSM 10237 / CIP 104748 / NCIMB 11846 / Nb-255), this protein is UDP-N-acetylmuramate--L-alanine ligase.